The following is a 372-amino-acid chain: Delta-type opioid receptor (372 aa).

The Extracellular segment spans residues 1–47; sequence MELVPSARAELQSSPLVNLSDAFPSAFPSAGANASGSPGARSASSLA. Residues Asn18 and Asn33 are each glycosylated (N-linked (GlcNAc...) asparagine). A helical membrane pass occupies residues 48–75; the sequence is LAIAITALYSAVCAVGLLGNVLVMFGIV. Residues 76 to 85 lie on the Cytoplasmic side of the membrane; the sequence is RYTKLKTATN. A helical transmembrane segment spans residues 86-110; sequence IYIFNLALADALATSTLPFQSAKYL. Topologically, residues 111 to 122 are extracellular; it reads METWPFGELLCK. Residues Cys121 and Cys198 are joined by a disulfide bond. A helical transmembrane segment spans residues 123-144; it reads AVLSIDYYNMFTSIFTLTMMSV. Topologically, residues 145-163 are cytoplasmic; the sequence is DRYIAVCHPVKALDFRTPA. The helical transmembrane segment at 164 to 186 threads the bilayer; it reads KAKLINICIWVLASGVGVPIMVM. At 187-206 the chain is on the extracellular side; sequence AVTQPRDGAVVCMLQFPSPS. Residues 207–238 traverse the membrane as a helical segment; sequence WYWDTVTKICVFLFAFVVPILIITVCYGLMLL. Residues 239 to 261 lie on the Cytoplasmic side of the membrane; it reads RLRSVRLLSGSKEKDRSLRRITR. Residues 262-284 form a helical membrane-spanning segment; the sequence is MVLVVVGAFVVCWAPIHIFVIVW. The Extracellular segment spans residues 285-299; it reads TLVDINRRDPLVVAA. The chain crosses the membrane as a helical span at residues 300 to 321; that stretch reads LHLCIALGYANSSLNPVLYAFL. Over 322–372 the chain is Cytoplasmic; sequence DENFKRCFRQLCRTPCGRQEPGSLRRPRQATTRERVTACTPSDGPGGGAAA. Cys333 is lipidated: S-palmitoyl cysteine. Residues 340–372 form a disordered region; sequence QEPGSLRRPRQATTRERVTACTPSDGPGGGAAA.

The protein belongs to the G-protein coupled receptor 1 family. In terms of assembly, may form homooligomers. Forms a heterodimer with OPRM1. Interacts with GPRASP1. Interacts with RTP4; the interaction promotes cell surface localization of the OPRD1-OPRM1 heterodimer. Post-translationally, ubiquitinated. A basal ubiquitination seems not to be related to degradation. Ubiquitination is increased upon formation of OPRM1:OPRD1 oligomers leading to proteasomal degradation; the ubiquitination is diminished by RTP4. Brain, with high concentrations in the basal ganglia and limbic regions.

It is found in the cell membrane. In terms of biological role, G-protein coupled receptor that functions as a receptor for endogenous enkephalins and for a subset of other opioids. Ligand binding causes a conformation change that triggers signaling via guanine nucleotide-binding proteins (G proteins) and modulates the activity of down-stream effectors, such as adenylate cyclase. Signaling leads to the inhibition of adenylate cyclase activity. Inhibits neurotransmitter release by reducing calcium ion currents and increasing potassium ion conductance. Plays a role in the perception of pain and in opiate-mediated analgesia. Plays a role in developing analgesic tolerance to morphine. The chain is Delta-type opioid receptor (Oprd1) from Mus musculus (Mouse).